Consider the following 105-residue polypeptide: Met repressor (105 aa).

Belongs to the MetJ family. As to quaternary structure, homodimer.

The protein localises to the cytoplasm. Its function is as follows. This regulatory protein, when combined with SAM (S-adenosylmethionine) represses the expression of the methionine regulon and of enzymes involved in SAM synthesis. The protein is Met repressor of Actinobacillus pleuropneumoniae serotype 7 (strain AP76).